A 203-amino-acid chain; its full sequence is Urease accessory protein UreG (203 aa).

11-18 (GPVGSGKT) provides a ligand contact to GTP.

The protein belongs to the SIMIBI class G3E GTPase family. UreG subfamily. Homodimer. UreD, UreF and UreG form a complex that acts as a GTP-hydrolysis-dependent molecular chaperone, activating the urease apoprotein by helping to assemble the nickel containing metallocenter of UreC. The UreE protein probably delivers the nickel.

Its subcellular location is the cytoplasm. Its function is as follows. Facilitates the functional incorporation of the urease nickel metallocenter. This process requires GTP hydrolysis, probably effectuated by UreG. This chain is Urease accessory protein UreG, found in Prochlorococcus marinus (strain AS9601).